Here is a 119-residue protein sequence, read N- to C-terminus: FAD-linked sulfhydryl oxidase (119 aa).

The region spanning 1 to 97 is the ERV/ALR sulfhydryl oxidase domain; it reads MLHWGPKFWR…ISWSEYKNIY (97 aa). The cysteines at positions 44 and 47 are disulfide-linked.

This sequence belongs to the asfivirus B119L family. In terms of assembly, interacts with A151R. The cofactor is FAD.

It is found in the host cytoplasm. It localises to the virion. The catalysed reaction is 2 R'C(R)SH + O2 = R'C(R)S-S(R)CR' + H2O2. FAD-dependent sulfhydryl oxidase that catalyzes the formation of disulfide bonds in viral proteins produced in the cell cytoplasm. The protein is FAD-linked sulfhydryl oxidase of Ornithodoros (relapsing fever ticks).